We begin with the raw amino-acid sequence, 462 residues long: Syringate O-demethylase (462 aa).

Belongs to the GcvT family.

It carries out the reaction syringate + (6S)-5,6,7,8-tetrahydrofolate = 3-O-methylgallate + (6S)-5-methyl-5,6,7,8-tetrahydrofolate. Its pathway is secondary metabolite metabolism; lignin degradation. Its function is as follows. Involved in the catabolism of syringate. Catalyzes the conversion of syringate to 3-O-methylgallate (3MGA) in the presence of tetrahydrofolate. Has weak activity with vanillate and 3-O-methylgallate. The polypeptide is Syringate O-demethylase (Sphingobium sp. (strain NBRC 103272 / SYK-6)).